Here is a 27-residue protein sequence, read N- to C-terminus: rRNA/tRNA 2'-O-methyltransferase fibrillarin (27 aa).

Gly residues predominate over residues 1 to 12; the sequence is XFEGRGGFGGRG. The tract at residues 1–27 is disordered; that stretch reads XFEGRGGFGGRGGGDRGGRGXGGFGGG. An asymmetric dimethylarginine mark is found at arginine 5, arginine 11, arginine 16, and arginine 19.

It belongs to the methyltransferase superfamily. Fibrillarin family. In terms of assembly, component of box C/D small nucleolar ribonucleoprotein (snoRNP) particles. It is associated with the U3, U8 and U13 small nuclear RNAs.

The protein localises to the nucleus. It is found in the nucleolus. It carries out the reaction L-glutaminyl-[histone H2A] + S-adenosyl-L-methionine = N(5)-methyl-L-glutaminyl-[histone H2A] + S-adenosyl-L-homocysteine + H(+). Functionally, S-adenosyl-L-methionine-dependent methyltransferase that has the ability to methylate both RNAs and proteins. Involved in pre-rRNA processing. Utilizes the methyl donor S-adenosyl-L-methionine to catalyze the site-specific 2'-hydroxyl methylation of ribose moieties in pre-ribosomal RNA. Site specificity is provided by a guide RNA that base pairs with the substrate. Methylation occurs at a characteristic distance from the sequence involved in base pairing with the guide RNA. Also acts as a protein methyltransferase by mediating methylation of 'Gln-105' of histone H2A (H2AQ105me), a modification that impairs binding of the FACT complex and is specifically present at 35S ribosomal DNA locus. The sequence is that of rRNA/tRNA 2'-O-methyltransferase fibrillarin from Physarum polycephalum (Slime mold).